Reading from the N-terminus, the 102-residue chain is Neuropeptide F (102 aa).

An N-terminal signal peptide occupies residues 1 to 26 (MCQTMRCILVACVALALLAAGCRVEA). Positions 27 to 32 (SNSRPP) are excised as a propeptide. Residue phenylalanine 62 is modified to Phenylalanine amide. The propeptide occupies 66 to 102 (GSLMDILRNHEMDNINLGKNANNGGEFARGFNEEEIF).

The protein belongs to the NPY family. Expressed in midgut, brain lobes and ventral nerve cord of larvae. Predominantly expressed in two pairs of protocerebral neurons in the larval CNS (at protein level). Intense expression is also seen in the fan-shaped body of the central complex and two lateral areas of the lower part of the central brain that appear to harbor the giant commissural interneurons of the giant fiber pathway (at protein level). Upon glucose feeding, two additional dNPFergic neurons are consistently detected on the ventromedial surface of the subesophageal ganglion (SEG) of third instars larvae. Expressed in a subset of sugar-responsive PAIN neurons in the thoracic body but is absent from other peripheral PAIN neurons.

It localises to the secreted. Functionally, integral part of the sensory system that mediates food signaling, providing the neural basis for the regulation of food response; coordinates larval foraging and social behavior changes during development. Required in dopaminergic (DA) neurons that innervate the mushroom body for satiety to suppress appetitive memory performance; a key factor in the internal state of hunger in the brain. NPF neurons coordinately modulate diverse sensory and motor neurons important for feeding, flight, and locomotion. NPF/NPFR pathway exerts its suppressive effect on larval aversion to diverse stressful stimuli (chemical stress and noxious heat) through attenuation of TRP channel-induced neuronal excitation. NPF neural signaling system plays a physiological role in acute modulation of alcohol sensitivity in adults, rather than a general response to intoxication by sedative agents. Activation and inhibition of the NPF system reduces and enhances ethanol preference, respectively. Sexual experience, the NPF system activity and ethanol consumption are all linked; sexual deprivation is a major contributor to enhanced ethanol preference. This Drosophila melanogaster (Fruit fly) protein is Neuropeptide F (NPF).